A 450-amino-acid polypeptide reads, in one-letter code: Phosphoglucosamine mutase (450 aa).

Serine 101 functions as the Phosphoserine intermediate in the catalytic mechanism. The Mg(2+) site is built by serine 101, aspartate 242, aspartate 244, and aspartate 246. Serine 101 is subject to Phosphoserine.

The protein belongs to the phosphohexose mutase family. Requires Mg(2+) as cofactor. Post-translationally, activated by phosphorylation.

It carries out the reaction alpha-D-glucosamine 1-phosphate = D-glucosamine 6-phosphate. Its function is as follows. Catalyzes the conversion of glucosamine-6-phosphate to glucosamine-1-phosphate. The polypeptide is Phosphoglucosamine mutase (Rhodopseudomonas palustris (strain BisA53)).